Here is a 1342-residue protein sequence, read N- to C-terminus: DNA-directed RNA polymerase subunit beta (1342 aa).

It belongs to the RNA polymerase beta chain family. As to quaternary structure, the RNAP catalytic core consists of 2 alpha, 1 beta, 1 beta' and 1 omega subunit. When a sigma factor is associated with the core the holoenzyme is formed, which can initiate transcription.

It catalyses the reaction RNA(n) + a ribonucleoside 5'-triphosphate = RNA(n+1) + diphosphate. Its function is as follows. DNA-dependent RNA polymerase catalyzes the transcription of DNA into RNA using the four ribonucleoside triphosphates as substrates. The sequence is that of DNA-directed RNA polymerase subunit beta from Colwellia psychrerythraea (strain 34H / ATCC BAA-681) (Vibrio psychroerythus).